Reading from the N-terminus, the 329-residue chain is DNA-directed RNA polymerase subunit alpha (329 aa).

Residues 1 to 234 (MQGSVTEFLK…EQLDAFVELR (234 aa)) are alpha N-terminal domain (alpha-NTD). Residues 248–329 (FDPILLRPVD…WPPASLIDND (82 aa)) are alpha C-terminal domain (alpha-CTD).

It belongs to the RNA polymerase alpha chain family. In terms of assembly, homodimer. The RNAP catalytic core consists of 2 alpha, 1 beta, 1 beta' and 1 omega subunit. When a sigma factor is associated with the core the holoenzyme is formed, which can initiate transcription.

It carries out the reaction RNA(n) + a ribonucleoside 5'-triphosphate = RNA(n+1) + diphosphate. Functionally, DNA-dependent RNA polymerase catalyzes the transcription of DNA into RNA using the four ribonucleoside triphosphates as substrates. The protein is DNA-directed RNA polymerase subunit alpha of Idiomarina loihiensis (strain ATCC BAA-735 / DSM 15497 / L2-TR).